The primary structure comprises 480 residues: Heparin cofactor 2 (480 aa).

The signal sequence occupies residues 1 to 19 (MQHRPHLLLISLTIMSVCG). Residue asparagine 32 is glycosylated (N-linked (GlcNAc...) asparagine). A run of 2 repeats spans residues 56 to 66 (GEEDDDYLDLE) and 70 to 80 (SEDDDYIDIID). The 2 X 11 AA approximate repeats, Asp/Glu-rich (acidic) (hirudin-like) stretch occupies residues 56 to 80 (GEEDDDYLDLEKLLSEDDDYIDIID). Residues tyrosine 62 and tyrosine 75 each carry the sulfotyrosine modification. Asparagine 169 is a glycosylation site (N-linked (GlcNAc...) asparagine). Residues 173 to 193 (KYEILTIHNLFRKLTHRLFRR) are glycosaminoglycan-binding site. N-linked (GlcNAc...) asparagine glycans are attached at residues asparagine 368 and asparagine 404.

It belongs to the serpin family. In terms of processing, N-glycosylated; different glycan composition appears to lead to two forms of this protein (56 and 60 kDa).

In terms of biological role, thrombin inhibitor activated by the glycosaminoglycans, heparin or dermatan sulfate. In the presence of the latter, HC-II becomes the predominant thrombin inhibitor in place of antithrombin III (AT). This is Heparin cofactor 2 (SERPIND1) from Oryctolagus cuniculus (Rabbit).